Consider the following 319-residue polypeptide: NADH-ubiquinone oxidoreductase chain 1 (319 aa).

Helical transmembrane passes span 5-25 (TINS…LTLM), 72-92 (LLIS…TPIP), 102-122 (LGLL…LWAG), 146-166 (VTLG…TMQL), 173-193 (FTWL…STLA), 225-245 (FFLT…ILFI), 254-274 (ELFL…FLWI), and 295-315 (LPLT…TSGI).

It belongs to the complex I subunit 1 family.

The protein localises to the mitochondrion inner membrane. The enzyme catalyses a ubiquinone + NADH + 5 H(+)(in) = a ubiquinol + NAD(+) + 4 H(+)(out). Core subunit of the mitochondrial membrane respiratory chain NADH dehydrogenase (Complex I) that is believed to belong to the minimal assembly required for catalysis. Complex I functions in the transfer of electrons from NADH to the respiratory chain. The immediate electron acceptor for the enzyme is believed to be ubiquinone. The polypeptide is NADH-ubiquinone oxidoreductase chain 1 (MT-ND1) (Varanus flavescens (Yellow monitor)).